The primary structure comprises 136 residues: S-protein homolog 17 (136 aa).

A signal peptide spans 1-22 (MKNLSIFMFVFSLCMFGHVSRA).

This sequence belongs to the plant self-incompatibility (S1) protein family.

The protein resides in the secreted. The sequence is that of S-protein homolog 17 from Arabidopsis thaliana (Mouse-ear cress).